Here is a 484-residue protein sequence, read N- to C-terminus: Glutamate--tRNA ligase (484 aa).

A 'HIGH' region motif is present at residues 11-21 (PSPTGYLHIGN). Positions 252–256 (KLSKR) match the 'KMSKS' region motif. ATP is bound at residue Lys255.

It belongs to the class-I aminoacyl-tRNA synthetase family. Glutamate--tRNA ligase type 1 subfamily. In terms of assembly, monomer.

Its subcellular location is the cytoplasm. The catalysed reaction is tRNA(Glu) + L-glutamate + ATP = L-glutamyl-tRNA(Glu) + AMP + diphosphate. Functionally, catalyzes the attachment of glutamate to tRNA(Glu) in a two-step reaction: glutamate is first activated by ATP to form Glu-AMP and then transferred to the acceptor end of tRNA(Glu). This chain is Glutamate--tRNA ligase, found in Staphylococcus aureus (strain COL).